Reading from the N-terminus, the 239-residue chain is Endonuclease V (239 aa).

Residues Asp-50 and Asp-118 each contribute to the Mg(2+) site.

Belongs to the endonuclease V family. It depends on Mg(2+) as a cofactor.

Its subcellular location is the cytoplasm. The catalysed reaction is Endonucleolytic cleavage at apurinic or apyrimidinic sites to products with a 5'-phosphate.. In terms of biological role, DNA repair enzyme involved in the repair of deaminated bases. Selectively cleaves double-stranded DNA at the second phosphodiester bond 3' to a deoxyinosine leaving behind the intact lesion on the nicked DNA. This Xylella fastidiosa (strain 9a5c) protein is Endonuclease V.